The primary structure comprises 1105 residues: Protein phosphatase 1 regulatory subunit 26 (1105 aa).

Disordered stretches follow at residues 228–382 (LNDK…NKLA), 444–468 (QSTYVIPTEPPPPPPEPQCDSDSLV), 504–526 (TSPELGSQSSKLSLTHKRKAKAM), and 589–748 (LNRG…DSDD). Residues 275 to 285 (LLRKHASDSKL) show a composition bias toward basic and acidic residues. Positions 306 to 317 (TKTSSPSPKSTP) are enriched in low complexity. Polar residues predominate over residues 359 to 368 (SPTSANSLTH). Pro residues predominate over residues 451–460 (TEPPPPPPEP). Positions 504–516 (TSPELGSQSSKLS) are enriched in polar residues. The span at 602 to 612 (SYSSGDKSSSL) shows a compositional bias: low complexity. Positions 628 to 647 (SKRKYKKRPKDGKSQCKKRV) are enriched in basic residues. Over residues 686-701 (NSLEKSKKRREEKAVE) the composition is skewed to basic and acidic residues. Residues 705-715 (PSCSSSPQGNK) show a composition bias toward polar residues. The span at 733-742 (RALDDAHESS) shows a compositional bias: basic and acidic residues.

It is found in the nucleus. It localises to the nucleolus. May inhibit phosphatase activity of protein phosphatase 1 (PP1) complexes. May positively regulate cell proliferation. The sequence is that of Protein phosphatase 1 regulatory subunit 26 (ppp1r26) from Xenopus laevis (African clawed frog).